A 318-amino-acid polypeptide reads, in one-letter code: Aspartate carbamoyltransferase catalytic subunit (318 aa).

Carbamoyl phosphate contacts are provided by Arg64 and Thr65. Lys92 contacts L-aspartate. Carbamoyl phosphate-binding residues include Arg114, His142, and Gln145. 2 residues coordinate L-aspartate: Arg176 and Arg230. Residues Gly271 and Pro272 each coordinate carbamoyl phosphate.

It belongs to the aspartate/ornithine carbamoyltransferase superfamily. ATCase family. In terms of assembly, heterododecamer (2C3:3R2) of six catalytic PyrB chains organized as two trimers (C3), and six regulatory PyrI chains organized as three dimers (R2).

It catalyses the reaction carbamoyl phosphate + L-aspartate = N-carbamoyl-L-aspartate + phosphate + H(+). It participates in pyrimidine metabolism; UMP biosynthesis via de novo pathway; (S)-dihydroorotate from bicarbonate: step 2/3. Catalyzes the condensation of carbamoyl phosphate and aspartate to form carbamoyl aspartate and inorganic phosphate, the committed step in the de novo pyrimidine nucleotide biosynthesis pathway. The sequence is that of Aspartate carbamoyltransferase catalytic subunit from Desulfovibrio desulfuricans (strain ATCC 27774 / DSM 6949 / MB).